The primary structure comprises 403 residues: Dihydroorotase (403 aa).

His48 and His50 together coordinate Zn(2+). Residues 50–52 (HLR) and Asn82 each bind substrate. The Zn(2+) site is built by Glu140, His172, His211, and Asp277. Residue Asp277 is part of the active site. His281 is a substrate binding site.

The protein belongs to the metallo-dependent hydrolases superfamily. DHOase family. Class I DHOase subfamily. The cofactor is Zn(2+).

The enzyme catalyses (S)-dihydroorotate + H2O = N-carbamoyl-L-aspartate + H(+). Its pathway is pyrimidine metabolism; UMP biosynthesis via de novo pathway; (S)-dihydroorotate from bicarbonate: step 3/3. Functionally, catalyzes the reversible cyclization of carbamoyl aspartate to dihydroorotate. The sequence is that of Dihydroorotase from Archaeoglobus fulgidus (strain ATCC 49558 / DSM 4304 / JCM 9628 / NBRC 100126 / VC-16).